We begin with the raw amino-acid sequence, 159 residues long: 2-C-methyl-D-erythritol 2,4-cyclodiphosphate synthase (159 aa).

Positions 9 and 11 each coordinate a divalent metal cation. 4-CDP-2-C-methyl-D-erythritol 2-phosphate-binding positions include Asp-9–His-11 and His-35–Ser-36. His-43 contributes to the a divalent metal cation binding site. Residues Asp-57–Gly-59, Phe-62–Asp-66, Thr-133–Glu-136, Phe-140, and Arg-143 contribute to the 4-CDP-2-C-methyl-D-erythritol 2-phosphate site.

Belongs to the IspF family. As to quaternary structure, homotrimer. It depends on a divalent metal cation as a cofactor.

The enzyme catalyses 4-CDP-2-C-methyl-D-erythritol 2-phosphate = 2-C-methyl-D-erythritol 2,4-cyclic diphosphate + CMP. It participates in isoprenoid biosynthesis; isopentenyl diphosphate biosynthesis via DXP pathway; isopentenyl diphosphate from 1-deoxy-D-xylulose 5-phosphate: step 4/6. Its function is as follows. Involved in the biosynthesis of isopentenyl diphosphate (IPP) and dimethylallyl diphosphate (DMAPP), two major building blocks of isoprenoid compounds. Catalyzes the conversion of 4-diphosphocytidyl-2-C-methyl-D-erythritol 2-phosphate (CDP-ME2P) to 2-C-methyl-D-erythritol 2,4-cyclodiphosphate (ME-CPP) with a corresponding release of cytidine 5-monophosphate (CMP). In Shouchella clausii (strain KSM-K16) (Alkalihalobacillus clausii), this protein is 2-C-methyl-D-erythritol 2,4-cyclodiphosphate synthase.